A 268-amino-acid polypeptide reads, in one-letter code: uncharacterized protein (268 aa).

The stretch at 132–159 (DELDEKIIEFDTKMNEILEELLEDVEVE) forms a coiled coil.

This is an uncharacterized protein from Methanocaldococcus jannaschii (strain ATCC 43067 / DSM 2661 / JAL-1 / JCM 10045 / NBRC 100440) (Methanococcus jannaschii).